The primary structure comprises 472 residues: MIIKQYLLKISLCVLLLGCDSAKKEISKNENSKTEVDYFADNGFGNAVALVQHPSGVYHNGITYVAYQGPLEDPYVASYNHETKEWKGPFKAGISEMGKDPSRKKKIDNHGKPALLIDNAGYVHIAFGGHGGMRHHGENTLGNYSYGKNLHAVSKKPYDISEWETRDNVSLFGTYSQFIKMDNGDIYLFYRHGAHRSDWVYQKSMDNGVTFSEPVSFLKHKRRTNIEAEDSWYPWVSRGNADDIIVAFDYHICRDNVNAQDARGHIPERHNVYYMVFDTKNGQWKNVKNERLQMPLTKEMADEKTLVRSIPNDWTFQGITDVDPDGNPHVAVLVGPDINARRSGPKRLQHFRWDGQQWLKSNTANLPRGDGDLEVTSATEVSIYLENKTSNDVGEISRWDSFNGGESFQKSKVFLQRENSGFVISSLIDNPHPDARIIVAEKEEGTDFRKMYLLGDNGPIKRSKKEAQVLND.

A signal peptide spans 1–21; sequence MIIKQYLLKISLCVLLLGCDS. Residues asparagine 46 and asparagine 109 each coordinate substrate. The active-site Proton donor is histidine 110. Residues lysine 112 and histidine 130 each coordinate substrate. Tyrosine 175 serves as the catalytic Proton acceptor. Substrate is bound by residues arginine 191, histidine 195, and tyrosine 233. Histidine 195 contributes to the Zn(2+) binding site. Residues histidine 251, cysteine 253, and histidine 265 each contribute to the Zn(2+) site. Histidine 265 is a substrate binding site.

This sequence belongs to the polysaccharide lyase 25 family.

Ulvan lyase involved in ulvan degradation. Ulvan is the main polysaccharide component of the Ulvales (green seaweed) cell wall. It is composed of disaccharide building blocks comprising 3-sulfated rhamnose (Rha3S) linked to D-glucuronic acid (GlcA), L-iduronic acid (IduA), or D-xylose (Xyl). Ulvan lyase catalyzes the endolytic cleavage of the glycosidic bond between Rha3S and the uronic acids GlcA or IduA, producing oligosaccharides that have unsaturated 4-deoxy-L-threo-hex-4-enopyranosiduronic acid (deltaUA) at the non-reducing end. This results eventually in the degradation of the ulvan polysaccharide into deltaUA-Rha3S disaccharides and deltaUA-Rha3S-Xyl-Rha3S tetrasaccharides. This Nonlabens ulvanivorans (Persicivirga ulvanivorans) protein is Ulvan lyase.